The chain runs to 80 residues: CLAVATA3/ESR (CLE)-related protein 14 (80 aa).

The N-terminal stretch at 1–26 (MKVWSQRLSFLIVMIFILAGLHSSSA) is a signal peptide. P71 and P74 each carry hydroxyproline. P74 is a glycosylation site (O-linked (Ara...) hydroxyproline).

It belongs to the CLV3/ESR signal peptide family. In terms of assembly, interacts with the extracellular leucine-rich repeat region of CLV2 and PEPR2. The O-glycosylation (arabinosylation) of the hydroxyproline Pro-74 enhances binding affinity of the CLE14p peptide for its receptor. In terms of tissue distribution, mostly expressed in roots, and, to a lower extent, in seedlings and leaves. Expressed in the primary root tip under Pi deficiency.

Its subcellular location is the secreted. It localises to the extracellular space. Its function is as follows. Extracellular signal peptide that regulates cell fate. Represses root apical meristem maintenance. Acts as an elicitor of the root meristem differentiation through the CLV2/CRN complex signaling pathway. Inhibits irreversibly root growth by reducing cell division rates in the root apical meristem. Regulates the transition of protophloem cells from proliferation to differentiation, thus impinging on postembryonic growth capacity of the root meristem; this signaling pathway requires CRN and CLV2. The sequence is that of CLAVATA3/ESR (CLE)-related protein 14 from Arabidopsis thaliana (Mouse-ear cress).